Consider the following 249-residue polypeptide: Probable endopeptidase YafL (249 aa).

The first 17 residues, 1-17 (MSLPSIPSFVLSGLLLI), serve as a signal peptide directing secretion. Residue C18 is the site of N-palmitoyl cysteine attachment. C18 carries the S-diacylglycerol cysteine lipid modification. The 128-residue stretch at 116-243 (HNITEVAIHR…DHFLGARRIL (128 aa)) folds into the NlpC/P60 domain. The Nucleophile role is filled by C147. H202 (proton acceptor) is an active-site residue. E214 is a catalytic residue.

This sequence belongs to the peptidase C40 family.

It is found in the cell membrane. The sequence is that of Probable endopeptidase YafL (yafL) from Escherichia coli (strain K12).